Consider the following 493-residue polypeptide: uncharacterized protein (493 aa).

FAD is bound at residue Asp8 to Glu37. His429 (proton acceptor) is an active-site residue.

Belongs to the GMC oxidoreductase family. It depends on FAD as a cofactor.

This is an uncharacterized protein from Rhodococcus erythropolis (Arthrobacter picolinophilus).